The following is a 130-amino-acid chain: Histone H2A type 1 (130 aa).

A disordered region spans residues 1-22 (MSGRGKQGGKARAKAKSRSSRA). Residue serine 2 is modified to N-acetylserine. At serine 2 the chain carries Phosphoserine; by RPS6KA5. Arginine 4 bears the Citrulline; alternate mark. A Symmetric dimethylarginine; by PRMT5; alternate modification is found at arginine 4. Residue lysine 6 is modified to N6-(2-hydroxyisobutyryl)lysine. Over residues 7–19 (QGGKARAKAKSRS) the composition is skewed to basic residues. Lysine 10 is modified (N6-(2-hydroxyisobutyryl)lysine; alternate). An N6-lactoyllysine; alternate modification is found at lysine 10. Position 10 is an N6-succinyllysine; alternate (lysine 10). Glycyl lysine isopeptide (Lys-Gly) (interchain with G-Cter in ubiquitin) cross-links involve residues lysine 14 and lysine 16. An N6-(2-hydroxyisobutyryl)lysine; alternate modification is found at lysine 37. At lysine 37 the chain carries N6-(beta-hydroxybutyryl)lysine; alternate. At lysine 37 the chain carries N6-crotonyllysine; alternate. N6-(2-hydroxyisobutyryl)lysine occurs at positions 75 and 76. Lysine 96 bears the N6-(2-hydroxyisobutyryl)lysine; alternate mark. Residue lysine 96 is modified to N6-succinyllysine; alternate. Position 96 is an N6-glutaryllysine; alternate (lysine 96). Lysine 100 carries the N6-glutaryllysine modification. An N5-methylglutamine modification is found at glutamine 105. An N6-(2-hydroxyisobutyryl)lysine; alternate modification is found at lysine 119. 2 positions are modified to N6-crotonyllysine; alternate: lysine 119 and lysine 120. An N6-glutaryllysine; alternate mark is found at lysine 119 and lysine 120. A Glycyl lysine isopeptide (Lys-Gly) (interchain with G-Cter in ubiquitin); alternate cross-link involves residue lysine 120. Position 121 is a phosphothreonine; by DCAF1 (threonine 121). The residue at position 126 (lysine 126) is an N6-crotonyllysine; alternate. Lysine 126 carries the post-translational modification N6-glutaryllysine; alternate.

The protein belongs to the histone H2A family. The nucleosome is a histone octamer containing two molecules each of H2A, H2B, H3 and H4 assembled in one H3-H4 heterotetramer and two H2A-H2B heterodimers. The octamer wraps approximately 147 bp of DNA. Interacts with VRK1; the interaction is mediated by the nucleosome acidic patch, a cluster of negatively charged residues of H2A and H2B forming a cleft within the nucleosome core. In terms of processing, deiminated on Arg-4 in granulocytes upon calcium entry. Post-translationally, monoubiquitination of Lys-120 (H2AK119Ub) by RING1, TRIM37 and RNF2/RING2 complex gives a specific tag for epigenetic transcriptional repression and participates in X chromosome inactivation of female mammals. It is involved in the initiation of both imprinted and random X inactivation. Ubiquitinated H2A is enriched in inactive X chromosome chromatin. Ubiquitination of H2A functions downstream of methylation of 'Lys-27' of histone H3 (H3K27me). H2AK119Ub by RNF2/RING2 can also be induced by ultraviolet and may be involved in DNA repair. Following DNA double-strand breaks (DSBs), it is ubiquitinated through 'Lys-63' linkage of ubiquitin moieties by the E2 ligase UBE2N and the E3 ligases RNF8 and RNF168, leading to the recruitment of repair proteins to sites of DNA damage. Ubiquitination at Lys-14 and Lys-16 (H2AK13Ub and H2AK15Ub, respectively) in response to DNA damage is initiated by RNF168 that mediates monoubiquitination at these 2 sites, and 'Lys-63'-linked ubiquitin are then conjugated to monoubiquitin; RNF8 is able to extend 'Lys-63'-linked ubiquitin chains in vitro. H2AK119Ub and ionizing radiation-induced 'Lys-63'-linked ubiquitination (H2AK13Ub and H2AK15Ub) are distinct events. Phosphorylation on Ser-2 (H2AS1ph) is enhanced during mitosis. Phosphorylation on Ser-2 by RPS6KA5/MSK1 directly represses transcription. Acetylation of H3 inhibits Ser-2 phosphorylation by RPS6KA5/MSK1. Phosphorylation at Thr-121 (H2AT120ph) by DCAF1 is present in the regulatory region of many tumor suppresor genes and down-regulates their transcription. In terms of processing, symmetric dimethylation on Arg-4 by the PRDM1/PRMT5 complex may play a crucial role in the germ-cell lineage. Post-translationally, glutamine methylation at Gln-105 (H2AQ104me) by FBL is specifically dedicated to polymerase I. It is present at 35S ribosomal DNA locus and impairs binding of the FACT complex. Crotonylation (Kcr) is specifically present in male germ cells and marks testis-specific genes in post-meiotic cells, including X-linked genes that escape sex chromosome inactivation in haploid cells. Crotonylation marks active promoters and enhancers and confers resistance to transcriptional repressors. It is also associated with post-meiotically activated genes on autosomes. In terms of processing, lactylated in macrophages by EP300/P300 by using lactoyl-CoA directly derived from endogenous or exogenous lactate, leading to stimulates gene transcription.

It localises to the nucleus. Its subcellular location is the chromosome. Core component of nucleosome. Nucleosomes wrap and compact DNA into chromatin, limiting DNA accessibility to the cellular machineries which require DNA as a template. Histones thereby play a central role in transcription regulation, DNA repair, DNA replication and chromosomal stability. DNA accessibility is regulated via a complex set of post-translational modifications of histones, also called histone code, and nucleosome remodeling. In Rattus norvegicus (Rat), this protein is Histone H2A type 1.